The chain runs to 384 residues: Beta-glucuronosyltransferase GlcAT14C (384 aa).

The Cytoplasmic segment spans residues 1 to 11 (MKRSHISSPRS). The chain crosses the membrane as a signal-anchor for type II membrane protein span at residues 12-34 (YSRPAISIFGVFLLFLLVLTLSS). Topologically, residues 35 to 384 (RKPSDSSSGL…HENFRAKQCK (350 aa)) are lumenal. Asn-156, Asn-285, and Asn-306 each carry an N-linked (GlcNAc...) asparagine glycan.

Belongs to the glycosyltransferase 14 family.

It is found in the golgi apparatus membrane. Its function is as follows. Beta-glucuronosyltransferase involved in the biosynthesis of type II arabinogalactan (AG). Modifies both the beta-1,6-linked galactan and beta-1,3-linked galactan present in type II AG. This chain is Beta-glucuronosyltransferase GlcAT14C, found in Arabidopsis thaliana (Mouse-ear cress).